Reading from the N-terminus, the 253-residue chain is UPF0758 protein Bxeno_A3578 (253 aa).

One can recognise an MPN domain in the interval 131–253 (LINSPEAVEN…VYSFARAGWP (123 aa)). Residues H202, H204, and D215 each contribute to the Zn(2+) site. The JAMM motif signature appears at 202–215 (HNHPSGAVQPSASD).

It belongs to the UPF0758 family.

The protein is UPF0758 protein Bxeno_A3578 of Paraburkholderia xenovorans (strain LB400).